Here is a 184-residue protein sequence, read N- to C-terminus: Elongation factor P (184 aa).

This sequence belongs to the elongation factor P family.

The protein localises to the cytoplasm. It participates in protein biosynthesis; polypeptide chain elongation. Functionally, involved in peptide bond synthesis. Stimulates efficient translation and peptide-bond synthesis on native or reconstituted 70S ribosomes in vitro. Probably functions indirectly by altering the affinity of the ribosome for aminoacyl-tRNA, thus increasing their reactivity as acceptors for peptidyl transferase. The sequence is that of Elongation factor P from Thermus thermophilus (strain ATCC BAA-163 / DSM 7039 / HB27).